Here is a 262-residue protein sequence, read N- to C-terminus: Ferric siderophore reductase (262 aa).

[2Fe-2S] cluster-binding residues include Cys-244, Cys-245, Cys-256, and Cys-259.

Monomer. [2Fe-2S] cluster is required as a cofactor.

It is found in the cytoplasm. The protein localises to the cell inner membrane. With respect to regulation, displays pH dependent redox properties. SufD is necessary for the stability of FhuF. In terms of biological role, siderophore-iron reductase which is involved in iron removal from the hydroxamate-type siderophores coprogen, ferrichrome and ferrioxamine B after their transport into the cell. Binds both the iron-loaded and the apo forms of ferrichrome. This Escherichia coli (strain K12) protein is Ferric siderophore reductase (fhuF).